Here is a 190-residue protein sequence, read N- to C-terminus: ADP-ribosylation factor-like protein 6 (190 aa).

G2 carries N-myristoyl glycine lipidation. GTP is bound by residues 24–31 (GLDNSGKT), 69–73 (DMAGQ), and 130–133 (NKMD).

It belongs to the small GTPase superfamily. Arf family. As to expression, specifically expressed in ciliated cells.

The protein localises to the cytoplasm. This is ADP-ribosylation factor-like protein 6 from Caenorhabditis elegans.